The following is a 254-amino-acid chain: Triosephosphate isomerase (254 aa).

12-14 (NWK) contacts substrate. His99 functions as the Electrophile in the catalytic mechanism. Glu169 serves as the catalytic Proton acceptor. Substrate-binding positions include Gly175, Ser214, and 235-236 (GG).

This sequence belongs to the triosephosphate isomerase family. Homodimer.

Its subcellular location is the cytoplasm. It catalyses the reaction D-glyceraldehyde 3-phosphate = dihydroxyacetone phosphate. It participates in carbohydrate biosynthesis; gluconeogenesis. It functions in the pathway carbohydrate degradation; glycolysis; D-glyceraldehyde 3-phosphate from glycerone phosphate: step 1/1. Involved in the gluconeogenesis. Catalyzes stereospecifically the conversion of dihydroxyacetone phosphate (DHAP) to D-glyceraldehyde-3-phosphate (G3P). The protein is Triosephosphate isomerase of Xanthobacter autotrophicus (strain ATCC BAA-1158 / Py2).